A 421-amino-acid chain; its full sequence is ATP-dependent RNA helicase RhlB (421 aa).

The Q motif motif lies at 9–37 (QKFSDFALHAKVIEALENKGFHYCTPIQA). One can recognise a Helicase ATP-binding domain in the interval 40 to 219 (LPLTLAGRDV…FEQMNNAEYV (180 aa)). ATP is bound at residue 53 to 60 (AQTGTGKT). The short motif at 165–168 (DEAD) is the DEAD box element. The 146-residue stretch at 245 to 390 (RLLQTLIEEE…QSKYNPDALL (146 aa)) folds into the Helicase C-terminal domain. Residues 386 to 421 (PDALLSELPPPKRLTRARSGNGPRRTGAPRNRRRPG) are disordered. Residues 405-414 (GNGPRRTGAP) are compositionally biased toward low complexity.

It belongs to the DEAD box helicase family. RhlB subfamily. Component of the RNA degradosome, which is a multiprotein complex involved in RNA processing and mRNA degradation.

It localises to the cytoplasm. It catalyses the reaction ATP + H2O = ADP + phosphate + H(+). DEAD-box RNA helicase involved in RNA degradation. Has RNA-dependent ATPase activity and unwinds double-stranded RNA. This is ATP-dependent RNA helicase RhlB from Enterobacter sp. (strain 638).